The chain runs to 652 residues: Probable endo-1,3(4)-beta-glucanase AFUB_029980 (652 aa).

An N-terminal signal peptide occupies residues 1–21 (MAPSSLLLSVGSLITSSLVSA). The GH16 domain maps to 36 to 289 (ESWQGESFIN…WAGNVFAEST (254 aa)). Residue Asn-64 is glycosylated (N-linked (GlcNAc...) asparagine). Glu-145 functions as the Nucleophile in the catalytic mechanism. Residue Glu-150 is the Proton donor of the active site. Residues Asn-200 and Asn-208 are each glycosylated (N-linked (GlcNAc...) asparagine). A disordered region spans residues 379–423 (NTVATSAADHATPSSAETTTVPAATGAPSVSATEGGDSELESTST). The segment covering 390–410 (TPSSAETTTVPAATGAPSVSA) has biased composition (polar residues). A glycan (N-linked (GlcNAc...) asparagine) is linked at Asn-453. Positions 509-551 (SEIPTAPPEPVSQAVSTGSFDDSDTAQGDSEEQGSIASASVAP) are disordered. Acidic residues predominate over residues 529–540 (DDSDTAQGDSEE). The GPI-anchor amidated asparagine moiety is linked to residue Asn-630. Positions 631 to 652 (GANRMSVGLSGLIGVMFIAALA) are cleaved as a propeptide — removed in mature form.

Belongs to the glycosyl hydrolase 16 family.

It is found in the cell membrane. It catalyses the reaction Endohydrolysis of (1-&gt;3)- or (1-&gt;4)-linkages in beta-D-glucans when the glucose residue whose reducing group is involved in the linkage to be hydrolyzed is itself substituted at C-3.. In terms of biological role, mixed-linked glucanase involved in the degradation of complex natural cellulosic substrates. The protein is Probable endo-1,3(4)-beta-glucanase AFUB_029980 of Aspergillus fumigatus (strain CBS 144.89 / FGSC A1163 / CEA10) (Neosartorya fumigata).